The following is a 300-amino-acid chain: Ribosomal RNA small subunit methyltransferase H (300 aa).

S-adenosyl-L-methionine is bound by residues 46–48, aspartate 65, phenylalanine 92, aspartate 107, and glutamine 114; that span reads GGH.

It belongs to the methyltransferase superfamily. RsmH family.

The protein resides in the cytoplasm. The catalysed reaction is cytidine(1402) in 16S rRNA + S-adenosyl-L-methionine = N(4)-methylcytidine(1402) in 16S rRNA + S-adenosyl-L-homocysteine + H(+). In terms of biological role, specifically methylates the N4 position of cytidine in position 1402 (C1402) of 16S rRNA. This Prochlorococcus marinus (strain AS9601) protein is Ribosomal RNA small subunit methyltransferase H.